The following is a 767-amino-acid chain: RNA cytosine C(5)-methyltransferase NSUN2 (767 aa).

Positions 1–36 are disordered; sequence MGRRSRGRRLQQQQRPEDAEDGAEGGGKRGEAGWEG. Lysine 46 is covalently cross-linked (Glycyl lysine isopeptide (Lys-Gly) (interchain with G-Cter in SUMO2)). Serine 139 carries the phosphoserine; by AURKB modification. Residues 184 to 190, aspartate 215, aspartate 242, and aspartate 268 each bind S-adenosyl-L-methionine; that span reads CAAPGSK. Catalysis depends on cysteine 321, which acts as the Nucleophile. The disordered stretch occupies residues 436–481; sequence NKRQPKLQGKSAETRESTQLSPADLTEGKPTDPSKLESPSFTGTGD. Residue serine 456 is modified to Phosphoserine. Residues 461-470 are compositionally biased toward basic and acidic residues; it reads TEGKPTDPSK. Glycyl lysine isopeptide (Lys-Gly) (interchain with G-Cter in SUMO2) cross-links involve residues lysine 464 and lysine 470. A Phosphoserine modification is found at serine 473. Glycyl lysine isopeptide (Lys-Gly) (interchain with G-Cter in SUMO2) cross-links involve residues lysine 511 and lysine 516. Lysine 586 bears the N6-acetyllysine; alternate mark. Lysine 586 bears the N6-malonyllysine; alternate mark. Residue lysine 586 forms a Glycyl lysine isopeptide (Lys-Gly) (interchain with G-Cter in SUMO2); alternate linkage. Serine 593 is modified (phosphoserine). Residues lysine 640, lysine 654, and lysine 660 each participate in a glycyl lysine isopeptide (Lys-Gly) (interchain with G-Cter in SUMO2) cross-link. At threonine 718 the chain carries Phosphothreonine. Over residues 719 to 730 the composition is skewed to polar residues; it reads NESAASTGQPDN. The interval 719 to 767 is disordered; that stretch reads NESAASTGQPDNDVTEGQRAGEPNSPDAEEANSPDVTAGCDPAGVHPPR. Serine 724, serine 743, and serine 751 each carry phosphoserine.

The protein belongs to the class I-like SAM-binding methyltransferase superfamily. RsmB/NOP family. TRM4 subfamily. In terms of assembly, interacts with NPM1 and NCL during interphase; interaction is disrupted following phosphorylation at Ser-139. Phosphorylated at Ser-139 by AURKB during mitosis, leading to abolish methyltransferase activity and the interaction with NPM1. In terms of tissue distribution, expressed in adult and fetal brain and in lymphoblastoid cells.

Its subcellular location is the nucleus. The protein resides in the nucleolus. It localises to the cytoplasm. It is found in the mitochondrion. The protein localises to the cytoskeleton. Its subcellular location is the spindle. The protein resides in the secreted. It localises to the extracellular exosome. It catalyses the reaction cytidine(48) in tRNA + S-adenosyl-L-methionine = 5-methylcytidine(48) in tRNA + S-adenosyl-L-homocysteine + H(+). The catalysed reaction is cytidine(49) in tRNA + S-adenosyl-L-methionine = 5-methylcytidine(49) in tRNA + S-adenosyl-L-homocysteine + H(+). It carries out the reaction cytidine(50) in tRNA + S-adenosyl-L-methionine = 5-methylcytidine(50) in tRNA + S-adenosyl-L-homocysteine + H(+). The enzyme catalyses cytidine(34) in tRNA precursor + S-adenosyl-L-methionine = 5-methylcytidine(34) in tRNA precursor + S-adenosyl-L-homocysteine + H(+). It catalyses the reaction a cytidine in mRNA + S-adenosyl-L-methionine = a 5-methylcytidine in mRNA + S-adenosyl-L-homocysteine + H(+). With respect to regulation, inhibited by magnesium ions. Its function is as follows. RNA cytosine C(5)-methyltransferase that methylates cytosine to 5-methylcytosine (m5C) in various RNAs, such as tRNAs, mRNAs and some long non-coding RNAs (lncRNAs). Involved in various processes, such as epidermal stem cell differentiation, testis differentiation and maternal to zygotic transition during early development: acts by increasing protein synthesis; cytosine C(5)-methylation promoting tRNA stability and preventing mRNA decay. Methylates cytosine to 5-methylcytosine (m5C) at positions 34 and 48 of intron-containing tRNA(Leu)(CAA) precursors, and at positions 48, 49 and 50 of tRNA(Gly)(GCC) precursors. tRNA methylation is required generation of RNA fragments derived from tRNAs (tRFs). Also mediates C(5)-methylation of mitochondrial tRNAs. Catalyzes cytosine C(5)-methylation of mRNAs, leading to stabilize them and prevent mRNA decay: mRNA stabilization involves YBX1 that specifically recognizes and binds m5C-modified transcripts. Cytosine C(5)-methylation of mRNAs also regulates mRNA export: methylated transcripts are specifically recognized by THOC4/ALYREF, which mediates mRNA nucleo-cytoplasmic shuttling. Also mediates cytosine C(5)-methylation of non-coding RNAs, such as vault RNAs (vtRNAs), promoting their processing into regulatory small RNAs. Cytosine C(5)-methylation of vtRNA VTRNA1.1 promotes its processing into small-vault RNA4 (svRNA4) and regulates epidermal differentiation. May act downstream of Myc to regulate epidermal cell growth and proliferation. Required for proper spindle assembly and chromosome segregation, independently of its methyltransferase activity. This Homo sapiens (Human) protein is RNA cytosine C(5)-methyltransferase NSUN2.